A 156-amino-acid chain; its full sequence is Small ribosomal subunit protein uS7c (156 aa).

It belongs to the universal ribosomal protein uS7 family. Part of the 30S ribosomal subunit.

The protein localises to the plastid. The protein resides in the chloroplast. Functionally, one of the primary rRNA binding proteins, it binds directly to 16S rRNA where it nucleates assembly of the head domain of the 30S subunit. This Pisum sativum (Garden pea) protein is Small ribosomal subunit protein uS7c (rps7).